The sequence spans 336 residues: 25S rRNA (uridine(2634)-N(3))-methyltransferase (336 aa).

Residues Pro286 to Asp307 form a disordered region. The span at Thr293–Asp307 shows a compositional bias: basic and acidic residues.

The protein belongs to the class I-like SAM-binding methyltransferase superfamily. BMT5 family.

The protein resides in the nucleus. Its subcellular location is the nucleolus. It catalyses the reaction uridine(2634) in 25S rRNA + S-adenosyl-L-methionine = N(3)-methyluridine(2634) in 25S rRNA + S-adenosyl-L-homocysteine + H(+). S-adenosyl-L-methionine-dependent methyltransferase that specifically methylates the N(3) position of uridine 2634 (m3U2634) in 25S rRNA. This Saccharomyces cerevisiae (strain ATCC 204508 / S288c) (Baker's yeast) protein is 25S rRNA (uridine(2634)-N(3))-methyltransferase (BMT5).